Reading from the N-terminus, the 138-residue chain is Small ribosomal subunit protein uS11c (138 aa).

The tract at residues 1–24 is disordered; it reads MAKAIPRSGSRRSGRIGSRKSTRR. The segment covering 9-24 has biased composition (basic residues); sequence GSRRSGRIGSRKSTRR.

This sequence belongs to the universal ribosomal protein uS11 family. In terms of assembly, part of the 30S ribosomal subunit.

The protein resides in the plastid. The protein localises to the chloroplast. This is Small ribosomal subunit protein uS11c from Panax ginseng (Korean ginseng).